The sequence spans 135 residues: MIFKLIIKPKGMGHYLKIRRKLKRKKPEFLRTNWYRKKAFRNDPKWRWGHGRDNKFRLKMKGKPRPPEPGYRSPRKVRGLLPNGLKPVIIHNVEELTKIKEGEIAVIHHAVGKRKRQQILEKAKELSIPIANPVL.

The segment at 51-77 is disordered; the sequence is GRDNKFRLKMKGKPRPPEPGYRSPRKV.

It belongs to the eukaryotic ribosomal protein eL32 family.

This chain is Large ribosomal subunit protein eL32 (rpl32e), found in Nanoarchaeum equitans (strain Kin4-M).